A 154-amino-acid chain; its full sequence is uncharacterized protein (154 aa).

It belongs to the MG032/MG096/MG288 family.

This is an uncharacterized protein from Mycoplasma pneumoniae (strain ATCC 29342 / M129 / Subtype 1) (Mycoplasmoides pneumoniae).